The chain runs to 87 residues: Small ribosomal subunit protein bS20 (87 aa).

Residues 1 to 26 (MANIKSAKKRAIQSEKRRKHNASRRS) are disordered.

The protein belongs to the bacterial ribosomal protein bS20 family.

Its function is as follows. Binds directly to 16S ribosomal RNA. The sequence is that of Small ribosomal subunit protein bS20 from Photorhabdus laumondii subsp. laumondii (strain DSM 15139 / CIP 105565 / TT01) (Photorhabdus luminescens subsp. laumondii).